We begin with the raw amino-acid sequence, 349 residues long: Phenylalanine--tRNA ligase alpha subunit (349 aa).

Position 258 (Glu-258) interacts with Mg(2+).

This sequence belongs to the class-II aminoacyl-tRNA synthetase family. Phe-tRNA synthetase alpha subunit type 1 subfamily. In terms of assembly, tetramer of two alpha and two beta subunits. Requires Mg(2+) as cofactor.

It is found in the cytoplasm. The enzyme catalyses tRNA(Phe) + L-phenylalanine + ATP = L-phenylalanyl-tRNA(Phe) + AMP + diphosphate + H(+). The protein is Phenylalanine--tRNA ligase alpha subunit of Rickettsia bellii (strain RML369-C).